The following is a 129-amino-acid chain: NADPH-dependent 7-cyano-7-deazaguanine reductase (129 aa).

Cys-42 (thioimide intermediate) is an active-site residue. Asp-49 serves as the catalytic Proton donor. Residues 64 to 66 and 83 to 84 contribute to the substrate site; these read VEL and HE.

This sequence belongs to the GTP cyclohydrolase I family. QueF type 1 subfamily.

The protein resides in the cytoplasm. It carries out the reaction 7-aminomethyl-7-carbaguanine + 2 NADP(+) = 7-cyano-7-deazaguanine + 2 NADPH + 3 H(+). Its pathway is tRNA modification; tRNA-queuosine biosynthesis. Catalyzes the NADPH-dependent reduction of 7-cyano-7-deazaguanine (preQ0) to 7-aminomethyl-7-deazaguanine (preQ1). This is NADPH-dependent 7-cyano-7-deazaguanine reductase from Synechococcus sp. (strain CC9605).